The chain runs to 321 residues: Glucokinase (321 aa).

ATP is bound at residue 9–14; it reads ADIGGT.

This sequence belongs to the bacterial glucokinase family.

Its subcellular location is the cytoplasm. The catalysed reaction is D-glucose + ATP = D-glucose 6-phosphate + ADP + H(+). The sequence is that of Glucokinase from Saccharophagus degradans (strain 2-40 / ATCC 43961 / DSM 17024).